Reading from the N-terminus, the 121-residue chain is uncharacterized protein (121 aa).

In terms of domain architecture, HTH gntR-type spans 9-77 (KPIYLQIADQ…RGQGTFIAEK (69 aa)). A DNA-binding region (H-T-H motif) is located at residues 37–56 (VREMAIQTKVNPNTIQRTYS).

This is an uncharacterized protein from Bacillus subtilis (strain 168).